We begin with the raw amino-acid sequence, 14507 residues long: Mucin-16 (14507 aa).

The segment covering 1-17 (MLKPSGLPGSSSPTRSL) has biased composition (low complexity). The interval 1–138 (MLKPSGLPGS…PRTRTSSTEG (138 aa)) is disordered. The Extracellular segment spans residues 1-14451 (MLKPSGLPGS…EPLTGNSDLP (14451 aa)). Polar residues-rich tracts occupy residues 35 to 46 (TGATLSPKTSTG) and 56 to 138 (PFTS…STEG). N139 carries an N-linked (GlcNAc...) asparagine glycan. 7 disordered regions span residues 160–180 (EKYTVPTETSTTEGDSTETPW), 198–229 (DSTASKENAPVSMTPAETTVTDSHTPGRTNPS), 265–287 (FSSPEPGSAGHSRISTSAPLSSS), 396–554 (LGGT…STSV), 655–674 (VSKTAAGSSPPGGTKPSYTM), 695–719 (SLGLTPLNTRHPFSSPEPDSAGHTK), and 740–888 (TSTF…RTTL). Residues 166–178 (TETSTTEGDSTET) are compositionally biased toward low complexity. The segment covering 212 to 229 (PAETTVTDSHTPGRTNPS) has biased composition (polar residues). Composition is skewed to low complexity over residues 276–287 (SRISTSAPLSSS) and 396–413 (LGGTSTSALTTTSPSTTL). Polar residues-rich tracts occupy residues 414-423 (VSEETNTHHS), 431-441 (GTLNTSMTPLE), and 460-478 (GFTTLDSKIRSPSQVSSSH). N-linked (GlcNAc...) asparagine glycosylation occurs at N434. Low complexity-rich tracts occupy residues 485 to 497 (TTGSTSGRQSSST) and 508 to 525 (ATTSSTSKASSWTSESTA). The segment covering 526–543 (QQFSEPQHTQWVETSPSM) has biased composition (polar residues). 4 stretches are compositionally biased toward polar residues: residues 696-706 (LGLTPLNTRHP), 740-780 (TSTF…NAAT), 787-796 (NATSPLTHPS), and 805-821 (SVLTLSTSAETTDSPNI). An N-linked (GlcNAc...) asparagine glycan is attached at N787. Positions 823 to 846 (PTGTLTSESSESPSTLSLPSVSGV) are enriched in low complexity. Composition is skewed to polar residues over residues 847 to 860 (KTTFSSSTPSTHLF) and 869 to 888 (TSNPSVSQPETSVSRVRTTL). 2 N-linked (GlcNAc...) asparagine glycosylation sites follow: N930 and N957. Composition is skewed to polar residues over residues 949-969 (SQTNRDTFNDSAAPQSTTWPE), 1092-1101 (GSSTPGRTSQ), 1124-1137 (GTSSALTPQMTATH), and 1301-1317 (SGSSPEMTAPGETNTGS). Disordered regions lie at residues 949 to 981 (SQTNRDTFNDSAAPQSTTWPETSPRFKTGLPSA), 1082 to 1101 (VSPSQSMDAAGSSTPGRTSQ), 1121 to 1149 (PRDGTSSALTPQMTATHPPSPDPGSARST), 1301 to 1378 (SGSS…NLTS), 1593 to 1641 (LGTQ…SSSS), and 1704 to 1757 (LSES…SPTT). Positions 1318–1328 (TWDPTTYITTT) are enriched in low complexity. 5 stretches are compositionally biased toward polar residues: residues 1334–1347 (SSAQVSTPHSVRTL), 1368–1378 (PKISSSPNLTS), 1596–1613 (QGRSSSEATTFWKPSTDT), 1621–1633 (GPTNIQSTPPMDN), and 1704–1745 (LSES…GSQM). N1375 carries N-linked (GlcNAc...) asparagine glycosylation. N-linked (GlcNAc...) asparagine glycosylation is present at N1633. A compositionally biased stretch (low complexity) spans 1746–1757 (STSIPLTSSPTT). 3 N-linked (GlcNAc...) asparagine glycosylation sites follow: N1840, N1877, and N1890. The span at 1846–1908 (DLSHGVHTSS…TEKSEVSSSI (63 aa)) shows a compositional bias: polar residues. Disordered stretches follow at residues 1846 to 1930 (DLSH…PGNR), 2010 to 2033 (VSASPTHENSVSSGSSTSSPYSSA), 2064 to 2140 (WPST…GASI), and 2153 to 2177 (RSDVSGLTSESTANPSLGTASSAGT). 2 stretches are compositionally biased toward low complexity: residues 2019–2033 (SVSSGSSTSSPYSSA) and 2064–2085 (WPSTSLSEALSSGHSGVSNPSS). Over residues 2111–2132 (HGPQNTAASTLNTDASSVTGLS) the composition is skewed to polar residues. Residues N2345 and N2375 are each glycosylated (N-linked (GlcNAc...) asparagine). Disordered stretches follow at residues 2393–2455 (PTSI…PFTI) and 2566–2591 (SESKAIHSSPQTPTTPTSGANWETSA). Composition is skewed to low complexity over residues 2417–2429 (TSTTETNTATSPS) and 2566–2583 (SESKAIHSSPQTPTTPTS). Residue N2737 is glycosylated (N-linked (GlcNAc...) asparagine). Disordered regions lie at residues 2789–2822 (TTGSQGMASSGGIRSGSTHSTGTKTFSSLPLTMN), 2838–2885 (TATQ…TWGI), 2901–3006 (DTKS…AMTS), 3019–3052 (TGQAARSGSSSSPISLSTEKETSFLSPTASTSRK), 3083–3148 (TLNM…ASSI), 3172–3235 (SQAA…PETT), 3251–3276 (ALGSGSTSISHLPTGTTSPTKSPTEN), 3299–3392 (GTPG…KTET), 3415–3436 (TSRSVDEAYSSTSSWSDQTSGS), and 3462–3491 (VSLPSGDQGITSLTNPSGGKTSSASSVTSP). Polar residues predominate over residues 2803-2819 (SGSTHSTGTKTFSSLPL). A compositionally biased stretch (low complexity) spans 2864–2875 (SASSSPSKAFAS). Polar residues-rich tracts occupy residues 2876–2885 (LTTAPPTWGI) and 2901–2918 (DTKSASLPTPGQSLNTIP). Residues 2919-2931 (DSDASTASSSLSK) show a composition bias toward low complexity. Polar residues predominate over residues 2942 to 2968 (MTSTKAISASSFQSTGFTETPEGSASP). A compositionally biased stretch (low complexity) spans 3019 to 3035 (TGQAARSGSSSSPISLS). The span at 3041-3052 (SFLSPTASTSRK) shows a compositional bias: polar residues. N-linked (GlcNAc...) asparagine glycosylation occurs at N3085. Residues 3107-3116 (TAETQTLTFT) show a composition bias toward low complexity. Composition is skewed to polar residues over residues 3117 to 3132 (PSETPTSLLPVSSPTE) and 3172 to 3181 (SQAAQGNSTW). A glycan (N-linked (GlcNAc...) asparagine) is linked at N3178. Positions 3188–3200 (TGSSPAGTSPGSP) are enriched in low complexity. 2 stretches are compositionally biased toward polar residues: residues 3201-3214 (EMSTTLKIMSSKEP) and 3251-3261 (ALGSGSTSISH). Low complexity predominate over residues 3263–3274 (PTGTTSPTKSPT). Polar residues-rich tracts occupy residues 3299 to 3342 (GTPG…TTGM) and 3360 to 3383 (VSLSTSSNILEDPVTSPNSVSSLT). Composition is skewed to low complexity over residues 3424–3436 (SSTSSWSDQTSGS) and 3477–3491 (PSGGKTSSASSVTSP). N3501 is a glycosylation site (N-linked (GlcNAc...) asparagine). Low complexity predominate over residues 3538-3555 (ISTTITTMGTNSISTTTP). 8 disordered regions span residues 3538 to 3588 (ISTT…STAA), 3644 to 3672 (TPSSDASAVKTETSTSERTLSPSDTTAST), 3794 to 3829 (RSSGVTFSRPDPTSKKAEQTSTQLPTTTSAHPGQVP), 3843 to 3879 (AKTPDATFQRQGQTALTTEARATSDSWNEKEKSTPSA), 3914 to 3982 (LESG…SPVV), 4024 to 4056 (MDTSSTTQTSIISSPGSTAITKGPRTEITSSKR), 4094 to 4121 (AMQTSPPGATSLSAPTLDTSATASWTGT), and 4138 to 4166 (FSKGPEDTSQPSPPSVEETSSSSSLVPIH). Polar residues-rich tracts occupy residues 3812–3824 (QTSTQLPTTTSAH) and 3848–3868 (ATFQRQGQTALTTEARATSDS). Low complexity predominate over residues 3916–3927 (SGTTSSPSWKSS). Over residues 3946–3982 (PSTNTVETTGWVTSSEHASHSTIPAHSASSKLTSPVV) the composition is skewed to polar residues. Residues 4026 to 4041 (TSSTTQTSIISSPGST) show a composition bias toward low complexity. Polar residues predominate over residues 4095-4121 (MQTSPPGATSLSAPTLDTSATASWTGT). Over residues 4152-4164 (SVEETSSSSSLVP) the composition is skewed to low complexity. N-linked (GlcNAc...) asparagine glycans are attached at residues N4220, N4498, N4606, N4613, and N4624. Disordered regions lie at residues 4728-4748 (VKDVSQTNPPFQDEASSPSSQ), 4845-4961 (HSTV…TRLS), and 5026-5066 (VSWT…KLSS). A compositionally biased stretch (polar residues) spans 4856 to 4876 (KVTSPNVTTSTMEDTTISRSI). Residue N4861 is glycosylated (N-linked (GlcNAc...) asparagine). Composition is skewed to low complexity over residues 4877 to 4914 (PKSSKTTRTETETTSSLTPKLRETSISQEITSSTETST) and 4924 to 4939 (TTEVSRTDVTSSSSTS). Polar residues-rich tracts occupy residues 4944-4961 (DQSTVSLDISTETNTRLS) and 5026-5037 (VSWTSPPSVDKT). Residues 5038-5047 (SSPSSFLSSP) are compositionally biased toward low complexity. The segment covering 5048-5059 (AMTTPSLISSTL) has biased composition (polar residues). N-linked (GlcNAc...) asparagine glycans are attached at residues N5096, N5131, and N5228. 3 disordered regions span residues 5128–5149 (VKANNSGHESHSPALADSETPK), 5221–5249 (EVSSTGVNSSSKISTPDHDKSTVPPDTFT), and 5271–5303 (TQASPPESASHSTLPLDTSTTLSQGGTHSTVTQ). A compositionally biased stretch (polar residues) spans 5221–5234 (EVSSTGVNSSSKIS). Residues 5280–5293 (SHSTLPLDTSTTLS) show a composition bias toward low complexity. Residues 5294–5303 (QGGTHSTVTQ) are compositionally biased toward polar residues. N-linked (GlcNAc...) asparagine glycosylation occurs at N5320. Disordered stretches follow at residues 5328 to 5365 (PVEETSSVSSLMSSPAMTSPSPVSSTSPQSIPSSPLPV), 5381 to 5400 (GTTSPESVTSSPPNLSSITH), 5426 to 5507 (NVGT…TNTA), 5519 to 5538 (ASRTEISSSRTSISDLDRPT), 5624 to 5654 (PVEETSSGFSLMSPSMTSPSPVSSTSPESIP), 5675 to 5696 (LGTTSPEPVTSSPPNLSSPTQE), and 5727 to 5747 (ISGHESQSSVPADSHTSKATS). 2 stretches are compositionally biased toward low complexity: residues 5333-5365 (SSVSSLMSSPAMTSPSPVSSTSPQSIPSSPLPV) and 5381-5393 (GTTSPESVTSSPP). Residue N5394 is glycosylated (N-linked (GlcNAc...) asparagine). Polar residues-rich tracts occupy residues 5426 to 5441 (NVGTSGSGHKSQSSVL) and 5447 to 5485 (SKATPLMSTTSTLGDTSVSTSTPNISQTNQIQTEPTASL). N-linked (GlcNAc...) asparagine glycosylation is present at N5470. Low complexity-rich tracts occupy residues 5495–5504 (SEKTSSTTET), 5520–5532 (SRTEISSSRTSIS), 5633–5654 (SLMSPSMTSPSPVSSTSPESIP), and 5675–5688 (LGTTSPEPVTSSPP). N-linked (GlcNAc...) asparagine glycosylation is present at N5689. Over residues 5727–5737 (ISGHESQSSVP) the composition is skewed to polar residues. N-linked (GlcNAc...) asparagine glycosylation is present at N5863. Disordered stretches follow at residues 5882–5931 (STAS…SSPV) and 6054–6078 (STSTPGSPETKNVDRDSTSPLTPEL). The span at 5903-5916 (TTTMSRSTKGVSWQ) shows a compositional bias: polar residues. The segment covering 5917–5928 (SPPSVEETSSPS) has biased composition (low complexity). Positions 6054–6063 (STSTPGSPET) are enriched in polar residues. N6088 is a glycosylation site (N-linked (GlcNAc...) asparagine). Disordered stretches follow at residues 6122 to 6149 (PASAQSTKSPDISPEASSSHSNSPPLTI), 6219 to 6251 (NSLSSQAPLLVTTSPSPVTSTLQEHSTSSLVSV), 6399 to 6425 (SRTELTSSSRTSIQGTEKPTMSPDTST), 6438 to 6459 (TKSEERTIATQTGPHRATSQGT), 6497 to 6545 (ISGT…TSLP), and 6682 to 6714 (TTGATETSRTEVASSRRTSIPGPDHSTESPDIS). 3 stretches are compositionally biased toward low complexity: residues 6134 to 6149 (SPEASSSHSNSPPLTI), 6226 to 6251 (PLLVTTSPSPVTSTLQEHSTSSLVSV), and 6399 to 6410 (SRTELTSSSRTS). 2 stretches are compositionally biased toward polar residues: residues 6411–6425 (IQGTEKPTMSPDTST) and 6445–6459 (IATQTGPHRATSQGT). Residues 6500 to 6523 (TSPPSVEKTSSSSSLLSLPAITSP) show a composition bias toward low complexity. Composition is skewed to polar residues over residues 6530-6545 (LPESRPSSPVHLTSLP) and 6683-6699 (TGATETSRTEVASSRRT). N6732 is a glycosylation site (N-linked (GlcNAc...) asparagine). Disordered regions lie at residues 6800–6822 (SFSSSLMPSPAMTSPPVSSTLPK), 6845–6865 (TLGTSPEPTTSSPPNLSSTSH), and 6886–6939 (TAAT…SETT). Positions 6848–6864 (TSPEPTTSSPPNLSSTS) are enriched in low complexity. N6859 is a glycosylation site (N-linked (GlcNAc...) asparagine). Positions 6886–6905 (TAATNVETTSSGHGSQSSVL) are enriched in polar residues. The span at 6919-6938 (TTSTMGHTTVSTSMSVSSET) shows a compositional bias: low complexity. A glycan (N-linked (GlcNAc...) asparagine) is linked at N6961. Disordered stretches follow at residues 6981-7004 (AEVSRTEVTSSGRTSIPGPSQSTV), 7028-7107 (MTIP…ATTS), 7143-7208 (TSPE…TSKA), 7279-7302 (SRTEVTSSSRTSISGSAESTMLPE), 7320-7345 (ESSEMTIKTQTSPPGSTSESTFTLDT), 7360-7427 (QRLP…SLLT), 7437-7456 (LDASAEPETSSPPSLSSTSV), 7463-7503 (EVTT…ETTK), 7527-7553 (SNTRKIQSEPASSLTTRLRETSTSEET), 7577-7597 (TEAISFSRTSMSGPEQSTMSQ), 7726-7782 (ATTT…TTSS), 7825-7849 (LASSLTPGLRESSGSEGTSSGTKMS), 7908-7927 (HTSPLGATTQGTSTLDTSST), and 7970-8000 (PSFSLMSSPATTSPSPVSSTLPESISSSPLP). The span at 7028–7038 (MTIPTQTGPSG) shows a compositional bias: polar residues. Positions 7039-7055 (STSQDTLTLDTSTTKSQ) are enriched in low complexity. Residues 7057-7075 (KTHSTLTQRFPHSEMTTLM) are compositionally biased toward polar residues. Low complexity predominate over residues 7086 to 7105 (SSPSLENPSSLPSLLSLPAT). Over residues 7166–7200 (GKDTTNTEAVHPSTNTAASNVEIPSSGHESPSSAL) the composition is skewed to polar residues. Residues 7279 to 7298 (SRTEVTSSSRTSISGSAEST) are compositionally biased toward low complexity. Polar residues-rich tracts occupy residues 7322 to 7345 (SEMTIKTQTSPPGSTSESTFTLDT), 7360 to 7371 (QRLPHSEITTLV), and 7390 to 7402 (SPPSSQLSLSAMI). Composition is skewed to low complexity over residues 7403–7427 (SPSPVSSTLPASSHSSSASVTSLLT) and 7439–7455 (ASAEPETSSPPSLSSTS). Over residues 7474–7484 (FSNTAVTKVGT) the composition is skewed to polar residues. Over residues 7485 to 7494 (SSSGHESPSS) the composition is skewed to low complexity. Residues 7733-7749 (GTSTEPGTSSSSSLSTT) show a composition bias toward low complexity. The segment covering 7750 to 7765 (SHERLTTYKDTAHTEA) has biased composition (basic and acidic residues). Positions 7768 to 7782 (PSTNTGGTNVATTSS) are enriched in polar residues. Composition is skewed to low complexity over residues 7835-7846 (ESSGSEGTSSGT), 7915-7927 (TTQGTSTLDTSST), and 7973-8000 (SLMSSPATTSPSPVSSTLPESISSSPLP). N-linked (GlcNAc...) asparagine glycosylation is found at N8029 and N8055. 8 disordered regions span residues 8042-8078 (EVTTDTEKTHPSSNRTVTDVGTSSSGHESTSFVLADS), 8111-8134 (IQTEPTSSLTLGLRKTSSSEGTSL), 8312-8331 (GISREPGTSSTSNLSSTSHE), 8342-8389 (TEDM…YTMG), 8411-8472 (TSSL…ISPD), 8604-8624 (MLRTSSEPETSSPPNLSSTSA), 8674-8741 (SPMA…TKVS), and 8775-8880 (TPLT…HSSP). A compositionally biased stretch (polar residues) spans 8052-8078 (PSSNRTVTDVGTSSSGHESTSFVLADS). Low complexity predominate over residues 8319–8328 (TSSTSNLSST). An N-linked (GlcNAc...) asparagine glycan is attached at N8324. The span at 8345-8389 (MQPSTHTAVTNVRTSISGHESQSSVLSDSETPKATSPMGTTYTMG) shows a compositional bias: polar residues. Over residues 8607-8624 (TSSEPETSSPPNLSSTSA) the composition is skewed to low complexity. N-linked (GlcNAc...) asparagine glycosylation is found at N8618 and N8684. Polar residues-rich tracts occupy residues 8674–8740 (SPMA…TTKV) and 8781–8810 (GSAEMTITPKTGHSGASSQGTFTLDTSSRA). The segment covering 8850–8880 (TSPPSSLVSLSAVTSPSPLYSTPSESSHSSP) has biased composition (low complexity). An N-linked (GlcNAc...) asparagine glycan is attached at N8913. 2 disordered regions span residues 8995–9018 (ESTSTLTPTPRETSTSQEIHSATK) and 9147–9168 (SLSSPVMTSSSPVSSTLPDSIH). N-linked (GlcNAc...) asparagine glycosylation occurs at N9202. The segment covering 9294-9307 (SISEETSSATEKST) has biased composition (low complexity). The segment at 9294-9460 (SISEETSSAT…TPSGSSHSSP (167 aa)) is disordered. Polar residues-rich tracts occupy residues 9308 to 9357 (VLSS…STPL) and 9374 to 9412 (SGATSQGTFTLDSSSTASWPGTHSATTQRFPQSVVTTPM). Over residues 9431-9460 (SPPSSLVSSSSVTSPSPLYSTPSGSSHSSP) the composition is skewed to low complexity. An N-linked (GlcNAc...) asparagine glycan is attached at N9493. Disordered regions lie at residues 9611 to 9635 (ATPEVSRTEVMPSSRTSIPGPAQST), 9726 to 9753 (SSSSLTSLPLTTSLSPVSSTLLDSSPSS), 9771 to 9791 (VLDTSSEPKTSSSPNLSSTSV), and 9869 to 9890 (TEPTFSLTPGFRETSTSEETTS). Polar residues predominate over residues 9621-9635 (MPSSRTSIPGPAQST). Low complexity-rich tracts occupy residues 9774–9790 (TSSEPKTSSSPNLSSTS) and 9881–9890 (ETSTSEETTS). A glycan (N-linked (GlcNAc...) asparagine) is linked at N9785. Residues N10075 and N10173 are each glycosylated (N-linked (GlcNAc...) asparagine). Disordered stretches follow at residues 10175-10218 (SLDT…PPAS) and 10445-10469 (TIRPVKGPQTSTSPASPKGLHTGGT). The span at 10178 to 10193 (TSSVTPTNTPSSPGST) shows a compositional bias: low complexity. The span at 10194 to 10212 (HLLQSSKTDFTSSAKTSSP) shows a compositional bias: polar residues. The N-linked (GlcNAc...) asparagine glycan is linked to N10510. Residues 10544–10573 (SLGAETSTALPRTTPSVFNRESETTASLVS) show a composition bias toward polar residues. 2 disordered regions span residues 10544–10590 (SLGA…DVSS) and 10689–10719 (ETSSTIPRTIPNFSHHESDATPSIATSPGAE). The N-linked (GlcNAc...) asparagine glycan is linked to N10700. The segment covering 10708–10719 (ATPSIATSPGAE) has biased composition (polar residues). A glycan (N-linked (GlcNAc...) asparagine) is linked at N10749. The span at 10849 to 10860 (TTPSMTTSHGAE) shows a compositional bias: polar residues. Disordered stretches follow at residues 10849–10872 (TTPSMTTSHGAESSSAVPTPTVST), 10898–10926 (LSPGEPETTPSMATSHGEEASSAIPTPTV), and 11003–11036 (LPTLTLSPGEPETTPSMATSHGAEASSTVPTVSP). Low complexity predominate over residues 10861-10872 (SSSAVPTPTVST). Low complexity predominate over residues 11003 to 11018 (LPTLTLSPGEPETTPS). The N-linked (GlcNAc...) asparagine glycan is linked to N11053. Residues 11072–11092 (SMATSHGAEASSAVPTPTVSP) form a disordered region. N-linked (GlcNAc...) asparagine glycans are attached at residues N11224 and N11263. 2 stretches are compositionally biased toward polar residues: residues 11269–11284 (HPAESSSTLPRTTSRF) and 11358–11381 (STTVPRTTPNYSHSEPDTTPSIAT). Disordered regions lie at residues 11269-11301 (HPAESSSTLPRTTSRFSHSELDTMPSTVTSPEA), 11358-11400 (STTV…SPDV), 11508-11537 (KFSHSKSDTTLPVAITSPGPEASSAVSTTT), 11583-11724 (ETST…TSPR), 11836-11861 (SPTASPGVSAKTAPLSTHPGTETSTM), and 11913-11937 (QTVTSWNTETSPSVTSVGPPEFSRT). N-linked (GlcNAc...) asparagine glycosylation occurs at N11367. 3 stretches are compositionally biased toward polar residues: residues 11583–11594 (ETSTTVSGTIPN), 11631–11651 (VTSQVTSSATDTSTAIPTLTP), and 11658–11672 (TTASSATHPGTQTGF). N11594 carries N-linked (GlcNAc...) asparagine glycosylation. The segment covering 11700 to 11717 (PVSRTTSSFSHSSPDATP) has biased composition (low complexity). 2 stretches are compositionally biased toward polar residues: residues 11849 to 11861 (PLSTHPGTETSTM) and 11913 to 11928 (QTVTSWNTETSPSVTS). A run of 12 repeats spans residues 12067–12223 (AATV…PSPT), 12224–12381 (TAGP…PTIM), 12382–12537 (AAGP…PSPA), 12538–12692 (TAGP…PSPT), 12693–12848 (TAGP…PSPT), 12849–13004 (SAGP…PSPT), 13005–13160 (TAVP…PSPT), 13161–13316 (TTGP…PGPT), 13317–13472 (ATGP…SGPM), 13473–13628 (TASP…PGPS), 13629–13784 (AASP…FGPS), and 13785–13939 (AASH…RYMA). The interval 12067 to 13939 (AATVPFMVPF…FTINNLRYMA (1873 aa)) is 12 X approximate tandem repeats. In terms of domain architecture, SEA 1 spans 12072 to 12193 (FMVPFTLNFT…NSLYVNGFTH (122 aa)). N-linked (GlcNAc...) asparagine glycans are attached at residues N12079, N12100, and N12116. C12126 and C12146 are oxidised to a cystine. N12168 carries N-linked (GlcNAc...) asparagine glycosylation. The tract at residues 12196–12226 (SMPTTSTPGTSTVDVGTSGTPSSSPSPTTAG) is disordered. One can recognise an SEA 2 domain in the interval 12228–12349 (LLMPFTLNFT…NSLYVNGFTH (122 aa)). N-linked (GlcNAc...) asparagine glycans are attached at residues N12235 and N12272. Residues C12282 and C12302 are joined by a disulfide bond. The interval 12353–12376 (VSTTSTPGTSTVDLRTSGTPSSLS) is disordered. 3 SEA domains span residues 12386–12507 (LLVP…GFTH), 12542–12663 (LLVL…GFTH), and 12697–12818 (LLVP…GFTH). Residues N12393, N12414, and N12430 are each glycosylated (N-linked (GlcNAc...) asparagine). C12440 and C12460 are disulfide-bonded. N-linked (GlcNAc...) asparagine glycosylation is found at N12549, N12570, and N12586. Residues C12596 and C12616 are joined by a disulfide bond. 3 N-linked (GlcNAc...) asparagine glycosylation sites follow: N12704, N12725, and N12741. C12751 and C12771 form a disulfide bridge. Positions 12819-12834 (QTSAPNTSTPGTSTVD) are enriched in polar residues. The interval 12819-12849 (QTSAPNTSTPGTSTVDLGTSGTPSSLPSPTS) is disordered. A glycan (N-linked (GlcNAc...) asparagine) is linked at N12824. Over residues 12835 to 12849 (LGTSGTPSSLPSPTS) the composition is skewed to low complexity. Positions 12853 to 12974 (LLVPFTLNFT…NSLYVNGFTH (122 aa)) constitute an SEA 6 domain. N12860, N12881, and N12897 each carry an N-linked (GlcNAc...) asparagine glycan. C12907 and C12927 are joined by a disulfide. Residues 12978–12990 (VAPTSTPGTSTVD) show a composition bias toward polar residues. The interval 12978–13003 (VAPTSTPGTSTVDLGTSGTPSSLPSP) is disordered. The span at 12991–13003 (LGTSGTPSSLPSP) shows a compositional bias: low complexity. SEA domains are found at residues 13009 to 13130 (LLVP…GFTH) and 13165 to 13286 (LLVP…GFTQ). 3 N-linked (GlcNAc...) asparagine glycosylation sites follow: N13016, N13037, and N13053. A disulfide bridge links C13063 with C13083. Residues N13172 and N13193 are each glycosylated (N-linked (GlcNAc...) asparagine). Cysteines 13219 and 13239 form a disulfide. The span at 13291–13313 (PTTSTPGTFTVQPETSETPSSLP) shows a compositional bias: polar residues. A disordered region spans residues 13291 to 13317 (PTTSTPGTFTVQPETSETPSSLPGPTA). SEA domains follow at residues 13321-13442 (VLLP…GFTH) and 13477-13598 (LLVL…GFTQ). N-linked (GlcNAc...) asparagine glycans are attached at residues N13328, N13349, and N13365. A disulfide bridge links C13375 with C13395. 3 N-linked (GlcNAc...) asparagine glycosylation sites follow: N13484, N13505, and N13521. C13531 and C13551 are joined by a disulfide. Residues 13603 to 13621 (PTTSIPGTPTVDLGTSGTP) show a composition bias toward polar residues. The segment at 13603-13625 (PTTSIPGTPTVDLGTSGTPVSKP) is disordered. SEA domains follow at residues 13633 to 13754 (LLVL…GFTH), 13789 to 13909 (LLIL…GFTH), 13922 to 14043 (SEEP…GYNE), and 14073 to 14193 (HLKT…GYAP). N13640 and N13661 each carry an N-linked (GlcNAc...) asparagine glycan. A disulfide bond links C13687 and C13707. Residues N13733, N13744, N13796, N13816, N13832, N13929, and N13950 are each glycosylated (N-linked (GlcNAc...) asparagine). A disulfide bond links C13976 and C13996. 2 N-linked (GlcNAc...) asparagine glycosylation sites follow: N14080 and N14100. A disulfide bridge connects residues C14126 and C14146. N-linked (GlcNAc...) asparagine glycosylation is found at N14195, N14212, N14254, N14287, N14326, and N14363. 2 SEA domains span residues 14198-14309 (IRGE…EMES) and 14319-14438 (STQH…GYSP). A disulfide bridge links C14373 with C14393. 2 N-linked (GlcNAc...) asparagine glycosylation sites follow: N14417 and N14423. Residues 14452 to 14472 (FWAVILIGLAGLLGVITCLIC) traverse the membrane as a helical segment. At 14473–14507 (GVLVTTRRRKKEGEYNVQQQCPGYYQSHLDLEDLQ) the chain is on the cytoplasmic side.

In terms of assembly, binds to MSLN. Binding to MSLN mediates heterotypic cell adhesion. This may contribute to the metastasis of ovarian cancer to the peritoneum by initiating cell attachment to the mesothelial epithelium via binding to MSLN. In terms of processing, heavily O-glycosylated; expresses both type 1 and type 2 core glycans. Post-translationally, heavily N-glycosylated; expresses primarily high mannose and complex bisecting type N-linked glycans. May be phosphorylated. Phosphorylation of the intracellular C-terminal domain may induce proteolytic cleavage and the liberation of the extracellular domain into the extracellular space. In terms of processing, may contain numerous disulfide bridges. Association of several molecules of the secreted form may occur through interchain disulfide bridges providing an extraordinarily large gel-like matrix in the extracellular space or in the lumen of secretory ducts. As to expression, expressed in corneal and conjunctival epithelia (at protein level). Overexpressed in ovarian carcinomas and ovarian low malignant potential (LMP) tumors as compared to the expression in normal ovarian tissue and ovarian adenomas.

Its subcellular location is the cell membrane. It is found in the secreted. It localises to the extracellular space. In terms of biological role, thought to provide a protective, lubricating barrier against particles and infectious agents at mucosal surfaces. This Homo sapiens (Human) protein is Mucin-16.